A 94-amino-acid chain; its full sequence is PqqA binding protein (94 aa).

It belongs to the PqqD family. In terms of assembly, monomer. Interacts with PqqE.

It functions in the pathway cofactor biosynthesis; pyrroloquinoline quinone biosynthesis. Its function is as follows. Functions as a PqqA binding protein and presents PqqA to PqqE, in the pyrroloquinoline quinone (PQQ) biosynthetic pathway. The sequence is that of PqqA binding protein from Pseudomonas savastanoi pv. phaseolicola (strain 1448A / Race 6) (Pseudomonas syringae pv. phaseolicola (strain 1448A / Race 6)).